Here is a 479-residue protein sequence, read N- to C-terminus: Anaerobic nitric oxide reductase flavorubredoxin (479 aa).

A zinc metallo-hydrolase region spans residues 30-210 (LRGSSYNSYL…PFSRLVTPKI (181 aa)). Residues histidine 79, glutamate 81, aspartate 83, histidine 147, aspartate 166, and histidine 227 each contribute to the Fe cation site. In terms of domain architecture, Flavodoxin-like spans 254–393 (ITIFYDTMSN…LCRQHGRDIA (140 aa)). Residues 260–264 (TMSNN) and 342–369 (AFGS…EMSL) each bind FMN. Residues 423–474 (GPKMQCSVCQWIYDPALGEPLQDVAPGTPWSDVPDNFLCPECSLGKDVFDVL) form the Rubredoxin-like domain. Fe cation contacts are provided by cysteine 428, cysteine 431, cysteine 461, and cysteine 464.

In the N-terminal section; belongs to the zinc metallo-hydrolase group 3 family. Homotetramer. Fe cation is required as a cofactor. FMN serves as cofactor.

The protein localises to the cytoplasm. The protein operates within nitrogen metabolism; nitric oxide reduction. Functionally, anaerobic nitric oxide reductase; uses NADH to detoxify nitric oxide (NO), protecting several 4Fe-4S NO-sensitive enzymes. Has at least 2 reductase partners, only one of which (NorW, flavorubredoxin reductase) has been identified. NO probably binds to the di-iron center; electrons enter from the NorW at rubredoxin and are transferred sequentially to the FMN center and the di-iron center. Also able to function as an aerobic oxygen reductase. This Salmonella typhi protein is Anaerobic nitric oxide reductase flavorubredoxin.